A 313-amino-acid chain; its full sequence is tRNA dimethylallyltransferase (313 aa).

Residue 17–24 coordinates ATP; the sequence is GPTASGKT. A substrate-binding site is contributed by 19–24; the sequence is TASGKT. Interaction with substrate tRNA stretches follow at residues 42–45, 166–170, 247–252, and 280–287; these read DSAL, QRLSR, RCVGYR, and KRQITWLR.

The protein belongs to the IPP transferase family. As to quaternary structure, monomer. It depends on Mg(2+) as a cofactor.

It catalyses the reaction adenosine(37) in tRNA + dimethylallyl diphosphate = N(6)-dimethylallyladenosine(37) in tRNA + diphosphate. Functionally, catalyzes the transfer of a dimethylallyl group onto the adenine at position 37 in tRNAs that read codons beginning with uridine, leading to the formation of N6-(dimethylallyl)adenosine (i(6)A). This is tRNA dimethylallyltransferase from Photorhabdus laumondii subsp. laumondii (strain DSM 15139 / CIP 105565 / TT01) (Photorhabdus luminescens subsp. laumondii).